A 204-amino-acid polypeptide reads, in one-letter code: Guanylate kinase (204 aa).

The Guanylate kinase-like domain maps to Pro-18–Ile-196. Ala-25 to Thr-32 provides a ligand contact to ATP.

The protein belongs to the guanylate kinase family.

The protein localises to the cytoplasm. It carries out the reaction GMP + ATP = GDP + ADP. Essential for recycling GMP and indirectly, cGMP. This Chlamydia abortus (strain DSM 27085 / S26/3) (Chlamydophila abortus) protein is Guanylate kinase.